The primary structure comprises 393 residues: Ribonuclease D (393 aa).

A 3'-5' exonuclease domain is found at 14 to 181; the sequence is LITTTEDLTG…VYQLLLERLE (168 aa). An HRDC domain is found at 219–300; the sequence is NRRMLGVLRA…AAARALPDGA (82 aa).

This sequence belongs to the RNase D family. The cofactor is a divalent metal cation.

It localises to the cytoplasm. The catalysed reaction is Exonucleolytic cleavage that removes extra residues from the 3'-terminus of tRNA to produce 5'-mononucleotides.. In terms of biological role, exonuclease involved in the 3' processing of various precursor tRNAs. Initiates hydrolysis at the 3'-terminus of an RNA molecule and releases 5'-mononucleotides. The polypeptide is Ribonuclease D (Gluconacetobacter diazotrophicus (strain ATCC 49037 / DSM 5601 / CCUG 37298 / CIP 103539 / LMG 7603 / PAl5)).